A 142-amino-acid polypeptide reads, in one-letter code: Probable signal recognition particle 19 kDa protein (142 aa).

The disordered stretch occupies residues Lys-115–Lys-142. Residues Ala-123–Gly-135 are compositionally biased toward low complexity.

The protein belongs to the SRP19 family. Component of a signal recognition particle complex that consists of a 7SL RNA molecule of 300 nucleotides and six protein subunits: srpa-72, srpa-68, SRP54, F37F2.2/SRP19, F25G6.8/SRP14 and ZK512.4/SRP9.

Its subcellular location is the cytoplasm. The protein localises to the nucleus. The protein resides in the nucleolus. Its function is as follows. Component of the signal recognition particle (SRP) complex, a ribonucleoprotein complex that mediates the cotranslational targeting of secretory and membrane proteins to the endoplasmic reticulum (ER). Binds directly to 7SL RNA. Mediates binding of SRP54 to the SRP complex. The sequence is that of Probable signal recognition particle 19 kDa protein from Caenorhabditis elegans.